The following is a 448-amino-acid chain: Histidine--tRNA ligase (448 aa).

Belongs to the class-II aminoacyl-tRNA synthetase family. In terms of assembly, homodimer.

The protein localises to the cytoplasm. It catalyses the reaction tRNA(His) + L-histidine + ATP = L-histidyl-tRNA(His) + AMP + diphosphate + H(+). The polypeptide is Histidine--tRNA ligase (Treponema denticola (strain ATCC 35405 / DSM 14222 / CIP 103919 / JCM 8153 / KCTC 15104)).